Reading from the N-terminus, the 128-residue chain is Sulfurtransferase TusD (128 aa).

C78 serves as the catalytic Cysteine persulfide intermediate.

The protein belongs to the DsrE/TusD family. In terms of assembly, heterohexamer, formed by a dimer of trimers. The hexameric TusBCD complex contains 2 copies each of TusB, TusC and TusD. The TusBCD complex interacts with TusE.

The protein localises to the cytoplasm. Its function is as follows. Part of a sulfur-relay system required for 2-thiolation of 5-methylaminomethyl-2-thiouridine (mnm(5)s(2)U) at tRNA wobble positions. Accepts sulfur from TusA and transfers it in turn to TusE. The protein is Sulfurtransferase TusD of Shigella boydii serotype 18 (strain CDC 3083-94 / BS512).